Consider the following 255-residue polypeptide: tRNA (guanine-N(1)-)-methyltransferase (255 aa).

S-adenosyl-L-methionine contacts are provided by residues glycine 114 and 134-139 (IGDYIL).

It belongs to the RNA methyltransferase TrmD family. In terms of assembly, homodimer.

It localises to the cytoplasm. It catalyses the reaction guanosine(37) in tRNA + S-adenosyl-L-methionine = N(1)-methylguanosine(37) in tRNA + S-adenosyl-L-homocysteine + H(+). Functionally, specifically methylates guanosine-37 in various tRNAs. The sequence is that of tRNA (guanine-N(1)-)-methyltransferase from Blochmanniella pennsylvanica (strain BPEN).